A 321-amino-acid polypeptide reads, in one-letter code: ATP-dependent 6-phosphofructokinase (321 aa).

An ATP-binding site is contributed by G10. Residue 20-24 participates in ADP binding; sequence RAVVR. ATP-binding positions include 71 to 72 and 101 to 104; these read RD and GEGT. E102 contacts Mg(2+). 125–127 is a binding site for substrate; sequence TID. The active-site Proton acceptor is D127. Residue R154 participates in ADP binding. Residues R162 and 169 to 171 contribute to the substrate site; that span reads MGR. ADP is bound by residues 185–187 and 213–215; these read GAE and KLH. Substrate is bound by residues E222, R246, and 252 to 255; that span reads HIQR.

This sequence belongs to the phosphofructokinase type A (PFKA) family. ATP-dependent PFK group I subfamily. Prokaryotic clade 'B1' sub-subfamily. Homotetramer. Mg(2+) is required as a cofactor.

Its subcellular location is the cytoplasm. The enzyme catalyses beta-D-fructose 6-phosphate + ATP = beta-D-fructose 1,6-bisphosphate + ADP + H(+). It participates in carbohydrate degradation; glycolysis; D-glyceraldehyde 3-phosphate and glycerone phosphate from D-glucose: step 3/4. With respect to regulation, allosterically activated by ADP and other diphosphonucleosides, and allosterically inhibited by phosphoenolpyruvate. In terms of biological role, catalyzes the phosphorylation of D-fructose 6-phosphate to fructose 1,6-bisphosphate by ATP, the first committing step of glycolysis. This is ATP-dependent 6-phosphofructokinase from Aquifex aeolicus (strain VF5).